Consider the following 378-residue polypeptide: MNIWLSMLTTTGLGAIIGGFTNHLAIKMLFRPHRPMYIGKFQVPFTPGLIPKRRDELAVQLGKMVVEHLLTPEGIGKKLTNEEFQKGLIHWAQVEVDKVMTNEQSLRNMLEKWNVAHVEKEVTEKIEQVITEKIQAFLEEYYTYTWEQALPHSVHEKIESAIPNVSAFILGRATQFFESEEGKTRLSKMIDDFFASRGTLLNLVGMFLGNVSVVDRVQPEVIKFLGQDGTKQLLTDVLQKEWEKLKGRDVKEVETFVEKEMIVSSILSAVKVEETVSKFLNQSVQQVCEPVRETMIEKVVPSAVTKVLKWGAKNVESILNKLHLAEIVQQEVSTFSTERLEDLVLSITKNELKMITYLGALLGGMIGIVQGLLLLFLK.

Helical transmembrane passes span methionine 1–threonine 21 and tyrosine 357–leucine 377.

The protein belongs to the UPF0754 family.

It is found in the cell membrane. This is UPF0754 membrane protein BCE_0952 from Bacillus cereus (strain ATCC 10987 / NRS 248).